The primary structure comprises 107 residues: Putative double-stranded DNA mimic protein HSM_1473 (107 aa).

Belongs to the putative dsDNA mimic protein family.

In terms of biological role, may act as a double-stranded DNA (dsDNA) mimic. Probably regulates the activity of a dsDNA-binding protein. This is Putative double-stranded DNA mimic protein HSM_1473 from Histophilus somni (strain 2336) (Haemophilus somnus).